Consider the following 1100-residue polypeptide: Tyrosine-protein kinase JAK3 (1100 aa).

The interval 1–223 (MAPPSEETPL…RRTVVQALRR (223 aa)) is cytokine/interferon/growth hormone receptors. Ser-17 is modified (phosphoserine). An FERM domain is found at 24–353 (GALHVLLPPR…GYFRLICDSR (330 aa)). In terms of domain architecture, SH2; atypical spans 372-472 (LCHGPITLDF…GTALNLTSCC (101 aa)). A Protein kinase 1 domain is found at 517–777 (LEWHENLGHG…AILRDLNGLI (261 aa)). Residue Tyr-781 is modified to Phosphotyrosine; by autocatalysis. Residues 818–1091 (LKYISLLGKG…PAFDTLSPQL (274 aa)) enclose the Protein kinase 2 domain. ATP contacts are provided by residues 824 to 832 (LGKGNFGSV) and Lys-851. Phosphotyrosine is present on residues Tyr-900 and Tyr-935. Asp-945 acts as the Proton acceptor in catalysis. 2 positions are modified to phosphotyrosine; by autocatalysis: Tyr-976 and Tyr-977.

This sequence belongs to the protein kinase superfamily. Tyr protein kinase family. JAK subfamily. Interacts with STAM2 and MYO18A. Interacts with SHB. Interacts with CD69. Autophosphorylated, leading to regulate its activity. IL2 promotes phosphorylation on tyrosine residues, including autophosphorylation on Tyr-781. Dephosphorylation of Tyr-976 and Tyr-977 by PTPN2 negatively regulates cytokine-mediated signaling. In contrast with the ubiquitous expression of the other JAKs, JAK3 is predominantly expressed in hematopoietic tissues.

The protein resides in the endomembrane system. Its subcellular location is the cytoplasm. It carries out the reaction L-tyrosyl-[protein] + ATP = O-phospho-L-tyrosyl-[protein] + ADP + H(+). Functionally, non-receptor tyrosine kinase involved in various processes such as cell growth, development, or differentiation. Mediates essential signaling events in both innate and adaptive immunity and plays a crucial role in hematopoiesis during T-cells development. In the cytoplasm, plays a pivotal role in signal transduction via its association with type I receptors sharing the common subunit gamma such as IL2R, IL4R, IL7R, IL9R, IL15R and IL21R. Following ligand binding to cell surface receptors, phosphorylates specific tyrosine residues on the cytoplasmic tails of the receptor, creating docking sites for STATs proteins. Subsequently, phosphorylates the STATs proteins once they are recruited to the receptor. Phosphorylated STATs then form homodimer or heterodimers and translocate to the nucleus to activate gene transcription. For example, upon IL2R activation by IL2, JAK1 and JAK3 molecules bind to IL2R beta (IL2RB) and gamma chain (IL2RG) subunits inducing the tyrosine phosphorylation of both receptor subunits on their cytoplasmic domain. Then, STAT5A and STAT5B are recruited, phosphorylated and activated by JAK1 and JAK3. Once activated, dimerized STAT5 translocates to the nucleus and promotes the transcription of specific target genes in a cytokine-specific fashion. The sequence is that of Tyrosine-protein kinase JAK3 from Rattus norvegicus (Rat).